A 442-amino-acid chain; its full sequence is Cell cycle checkpoint control protein RAD9B (442 aa).

2 disordered regions span residues 370 to 392 (EVPE…TEDV) and 422 to 442 (QSLA…FSTF). The residue at position 387 (serine 387) is a Phosphoserine.

This sequence belongs to the rad9 family. Interacts with HUS1, HUS1B, RAD1, RAD9A and RAD17.

The sequence is that of Cell cycle checkpoint control protein RAD9B (RAD9B) from Bos taurus (Bovine).